The chain runs to 318 residues: Taste receptor type 2 member 60 (318 aa).

Topologically, residues 1–7 are extracellular; sequence MNGDHMV. The helical transmembrane segment at 8–28 threads the bilayer; the sequence is LGSSVTDKKAIILVTILLLLR. Over 29–40 the chain is Cytoplasmic; the sequence is LVAIAGNGFITA. Residues 41–61 traverse the membrane as a helical segment; sequence ALGVEWVLRRMLLPCDKLLVS. Residues 62–88 lie on the Extracellular side of the membrane; the sequence is LGASHFCLQSVVMGKTIYVFLYPMAFP. The chain crosses the membrane as a helical span at residues 89-109; it reads YNPVLQFLAFQWDFLNAATLW. Residues 110 to 128 are Cytoplasmic-facing; it reads FSTWLSVFYCVKIATFTHP. The helical transmembrane segment at 129–149 threads the bilayer; it reads VFFWLKHKLSGWLPWMIFSYV. Residues 150–183 are Extracellular-facing; the sequence is GLSSFTTILFFIGNHRMYQNYLKNHLQPWNVTGN. The N-linked (GlcNAc...) asparagine glycan is linked to N179. A helical membrane pass occupies residues 184-204; it reads SIRSYCEKFYLFPLKMITWTM. At 205 to 234 the chain is on the cytoplasmic side; that stretch reads PTAVFFICMILLITSLGRHMKKALLTTSGF. A helical transmembrane segment spans residues 235–255; the sequence is REPSVQAHIKALLALLSFAML. The Extracellular segment spans residues 256-264; the sequence is FISYFLSLV. Residues 265–285 form a helical membrane-spanning segment; sequence FSAAGIFPPLDFKFWVWESVI. The Cytoplasmic portion of the chain corresponds to 286–318; the sequence is YLCAAVHPIILLFSNCRLRAVLKSRRSSRCGTP.

Belongs to the G-protein coupled receptor T2R family.

The protein resides in the membrane. Receptor that may play a role in the perception of bitterness and is gustducin-linked. May play a role in sensing the chemical composition of the gastrointestinal content. The activity of this receptor may stimulate alpha gustducin, mediate PLC-beta-2 activation and lead to the gating of TRPM5. The polypeptide is Taste receptor type 2 member 60 (TAS2R60) (Pan paniscus (Pygmy chimpanzee)).